The primary structure comprises 533 residues: Beta-glucosidase 10 (533 aa).

A signal peptide spans 1-23; that stretch reads MAVAGAMVMSGGVLLLLLAFTCA. Glutamine 53 provides a ligand contact to a beta-D-glucoside. Residue asparagine 122 is glycosylated (N-linked (GlcNAc...) asparagine). A beta-D-glucoside is bound by residues histidine 157 and 202 to 203; that span reads NE. Glutamate 203 serves as the catalytic Proton donor. Cysteine 222 and cysteine 230 form a disulfide bridge. Tyrosine 369 is a binding site for a beta-D-glucoside. Asparagine 384 is a glycosylation site (N-linked (GlcNAc...) asparagine). Glutamate 440 contributes to the a beta-D-glucoside binding site. The active-site Nucleophile is the glutamate 440. Asparagine 448 carries an N-linked (GlcNAc...) asparagine glycan. A beta-D-glucoside-binding positions include tryptophan 489, 496–497, and phenylalanine 505; that span reads EW.

This sequence belongs to the glycosyl hydrolase 1 family.

It catalyses the reaction Hydrolysis of terminal, non-reducing beta-D-glucosyl residues with release of beta-D-glucose.. The polypeptide is Beta-glucosidase 10 (BGLU10) (Oryza sativa subsp. japonica (Rice)).